The primary structure comprises 200 residues: MVKIGICGPVGSGKTALIESLTRKMNEQYSLAVITNDIYTQEDAEFMSKNSVLPSERIIGVETGGCPHTAIREDASMNLEAVEEMQERFPDIEILFIESGGDNLSATFSPELADFTIFVIDVAQGDKIPRKGGPGIMRSDLLIINKIDLAPYVGANLSIMERDAKKMREDKPFLFTNIRAKEGIDAVVEWIKKYALLEDI.

8 to 15 contacts GTP; the sequence is GPVGSGKT.

The protein belongs to the SIMIBI class G3E GTPase family. UreG subfamily. Homodimer. UreH, UreF and UreG form a complex that acts as a GTP-hydrolysis-dependent molecular chaperone, activating the urease apoprotein by helping to assemble the nickel containing metallocenter of UreC. The UreE protein probably delivers the nickel.

The protein resides in the cytoplasm. Its function is as follows. Facilitates the functional incorporation of the urease nickel metallocenter. This process requires GTP hydrolysis, probably effectuated by UreG. The polypeptide is Urease accessory protein UreG (Helicobacter hepaticus (strain ATCC 51449 / 3B1)).